The following is a 724-amino-acid chain: uncharacterized protein (724 aa).

Disordered stretches follow at residues Arg-97–Pro-131, Glu-187–Glu-252, Phe-309–Leu-434, and Arg-454–Lys-473. Polar residues predominate over residues Thr-115–Tyr-128. A coiled-coil region spans residues Glu-187 to Glu-217. Residues Glu-193–Asp-212 are compositionally biased toward acidic residues. 2 stretches are compositionally biased toward basic and acidic residues: residues Gln-223–Glu-252 and Phe-309–Glu-322. Composition is skewed to low complexity over residues Thr-323–Ser-333 and Ser-347–Ser-366. The span at Gln-367–Met-388 shows a compositional bias: pro residues. Positions Phe-400–Asn-410 are enriched in polar residues. Coiled coils occupy residues Ser-495–Gln-522 and Met-649–Arg-678.

This is an uncharacterized protein from Arabidopsis thaliana (Mouse-ear cress).